We begin with the raw amino-acid sequence, 244 residues long: Triosephosphate isomerase (244 aa).

Position 8 to 10 (8 to 10 (NWK)) interacts with substrate. His-93 (electrophile) is an active-site residue. Glu-161 acts as the Proton acceptor in catalysis. Residues Gly-167, Ser-206, and 227-228 (GG) contribute to the substrate site.

Belongs to the triosephosphate isomerase family. Homodimer.

Its subcellular location is the cytoplasm. The enzyme catalyses D-glyceraldehyde 3-phosphate = dihydroxyacetone phosphate. The protein operates within carbohydrate biosynthesis; gluconeogenesis. It functions in the pathway carbohydrate degradation; glycolysis; D-glyceraldehyde 3-phosphate from glycerone phosphate: step 1/1. Functionally, involved in the gluconeogenesis. Catalyzes stereospecifically the conversion of dihydroxyacetone phosphate (DHAP) to D-glyceraldehyde-3-phosphate (G3P). The sequence is that of Triosephosphate isomerase from Deinococcus radiodurans (strain ATCC 13939 / DSM 20539 / JCM 16871 / CCUG 27074 / LMG 4051 / NBRC 15346 / NCIMB 9279 / VKM B-1422 / R1).